A 159-amino-acid polypeptide reads, in one-letter code: MKVKLICVGKLKERYLKDGISEYQKRLSRFCQFEMIELTDERTPDKASFADNQLIMSKEAQRIHKKIEERDFVIALAIEGKQFPSETFSELISGVTVKGYSTITFIIGGSLGLDSIIKKRANMLMSFGLLTLPHQLMRLVLTEQIYRAFMITQGSPYHK.

S-adenosyl-L-methionine is bound by residues leucine 76, glycine 108, and 127–132 (FGLLTL).

This sequence belongs to the RNA methyltransferase RlmH family. As to quaternary structure, homodimer.

It is found in the cytoplasm. It carries out the reaction pseudouridine(1915) in 23S rRNA + S-adenosyl-L-methionine = N(3)-methylpseudouridine(1915) in 23S rRNA + S-adenosyl-L-homocysteine + H(+). Specifically methylates the pseudouridine at position 1915 (m3Psi1915) in 23S rRNA. The polypeptide is Ribosomal RNA large subunit methyltransferase H (Streptococcus pyogenes serotype M12 (strain MGAS2096)).